Reading from the N-terminus, the 207-residue chain is MRELTKRQSEIYDYIKHVVQTKGYPPSVREIGEAVGLASSSTVHGHLSRLEEKGYIKRDPTKPRAIEIVSEQTNDAVNMEETIYVPVIGKVTAGIPITAVENIEEYFPLPEHLTSTHNSDIFILNVVGESMIEAGILDGDKVIVRSQTIAENGDIIVAMTEDDEATVKRFYKEKTRYRLQPENSTMSPIYLDNVTVIGKVIGLYREL.

Positions 28–48 (VREIGEAVGLASSSTVHGHLS) form a DNA-binding region, H-T-H motif. Residues serine 130 and lysine 168 each act as for autocatalytic cleavage activity in the active site.

It belongs to the peptidase S24 family. Homodimer.

The catalysed reaction is Hydrolysis of Ala-|-Gly bond in repressor LexA.. Functionally, represses a number of genes involved in the response to DNA damage (SOS response), including recA and lexA. In the presence of single-stranded DNA, RecA interacts with LexA causing an autocatalytic cleavage which disrupts the DNA-binding part of LexA, leading to derepression of the SOS regulon and eventually DNA repair. This Staphylococcus haemolyticus (strain JCSC1435) protein is LexA repressor.